Reading from the N-terminus, the 120-residue chain is NAD(P)H-quinone oxidoreductase subunit 3, chloroplastic (120 aa).

3 helical membrane passes run 9 to 29, 64 to 84, and 88 to 108; these read IFWAFLIISSAIPVLAFLISG, MFALVFVVFDVETVFLYPWAM, and VLGVSAFIEVFIFVLILILGL.

It belongs to the complex I subunit 3 family. In terms of assembly, NDH is composed of at least 16 different subunits, 5 of which are encoded in the nucleus.

Its subcellular location is the plastid. The protein resides in the chloroplast thylakoid membrane. The enzyme catalyses a plastoquinone + NADH + (n+1) H(+)(in) = a plastoquinol + NAD(+) + n H(+)(out). The catalysed reaction is a plastoquinone + NADPH + (n+1) H(+)(in) = a plastoquinol + NADP(+) + n H(+)(out). Functionally, NDH shuttles electrons from NAD(P)H:plastoquinone, via FMN and iron-sulfur (Fe-S) centers, to quinones in the photosynthetic chain and possibly in a chloroplast respiratory chain. The immediate electron acceptor for the enzyme in this species is believed to be plastoquinone. Couples the redox reaction to proton translocation, and thus conserves the redox energy in a proton gradient. This Arabis hirsuta (Hairy rock-cress) protein is NAD(P)H-quinone oxidoreductase subunit 3, chloroplastic.